We begin with the raw amino-acid sequence, 245 residues long: UPF0246 protein LBUL_1917 (245 aa).

It belongs to the UPF0246 family.

In Lactobacillus delbrueckii subsp. bulgaricus (strain ATCC BAA-365 / Lb-18), this protein is UPF0246 protein LBUL_1917.